The following is a 107-amino-acid chain: Cytochrome c2 (107 aa).

Q1 is modified (pyrrolidone carboxylic acid). Residues C13, C16, H17, and M79 each coordinate heme c.

Belongs to the cytochrome c family. Binds 1 heme c group covalently per subunit.

The protein localises to the periplasm. In terms of biological role, cytochrome c2 is found mainly in purple, non-sulfur, photosynthetic bacteria where it functions as the electron donor to the oxidized bacteriochlorophyll in the photophosphorylation pathway. However, it may also have a role in the respiratory chain and is found in some non-photosynthetic bacteria. The polypeptide is Cytochrome c2 (Rhodoplanes tepidamans (Rhodoplanes cryptolactis)).